Here is a 472-residue protein sequence, read N- to C-terminus: Carboxypeptidase Q (472 aa).

The signal sequence occupies residues 1-20 (MKFLIFAFFGGVHLLSLCSG). A propeptide spanning residues 21–44 (KAICKNGISKRTFEEIKEEIASCG) is cleaved from the precursor. N-linked (GlcNAc...) asparagine glycosylation is found at Asn61 and Asn179. Zn(2+) contacts are provided by His290 and Asp302. Glu336 acts as the Nucleophile in catalysis. Glu337 is a binding site for Zn(2+). N-linked (GlcNAc...) asparagine glycans are attached at residues Asn353 and Asn356. Asp364 contacts Zn(2+). Asn396 is a glycosylation site (N-linked (GlcNAc...) asparagine). His434 is a binding site for Zn(2+).

Belongs to the peptidase M28 family. As to quaternary structure, homodimer. The monomeric form is inactive while the homodimer is active. N-glycosylated. The secreted form is modified by hybrid or complex type oligosaccharide chains. In terms of tissue distribution, mainly detected in blood plasma. Abundant in placenta and kidney. Present at low level in muscles, liver and skin fibroblasts. Not detected in brain or white blood cells (at protein level).

Its subcellular location is the endoplasmic reticulum. It is found in the golgi apparatus. It localises to the lysosome. The protein resides in the secreted. In terms of biological role, carboxypeptidase that may play an important role in the hydrolysis of circulating peptides. Catalyzes the hydrolysis of dipeptides with unsubstituted terminals into amino acids. May play a role in the liberation of thyroxine hormone from its thyroglobulin (Tg) precursor. This chain is Carboxypeptidase Q (CPQ), found in Homo sapiens (Human).